The chain runs to 376 residues: MRVESLLLALQCLLGFVHYSGALSTCSPLDLELIKRKRIEAIRGQILSKLRLSKEPEVDEEKESQNIPAELISVYNSTVELNEEQAAPPEQPKEDPVEEEYYAKEVHKFTIKLMEKNPDKFLWFNITDISQTLGLNRIISQVELRLLITTFPDGSEQRLELYQVIGNKSRYLESRFIPNQRKWLSFDVTQTLKDWLQRSEAEQGFQLKMADNCDPQKTFQLKIPGLVLVRGDTETLAVNMPRPHILVMSLPLDGNNSSKSRRKRQTETDQVCTDKSDGCCVRSLYIDFRKDLGWKWIHEPSGYYANYCTGSCSFVWTSENKYSQVLALYKHHNPGASAQPCRVPQVLNPLPIFYYVGRQHKVEQLSNMIVKTCKCC.

A signal peptide spans 1–22 (MRVESLLLALQCLLGFVHYSGA). Residues 23 to 68 (LSTCSPLDLELIKRKRIEAIRGQILSKLRLSKEPEVDEEKESQNIP) form a straightjacket domain region. Positions 69 to 258 (AELISVYNST…SLPLDGNNSS (190 aa)) are arm domain. N-linked (GlcNAc...) asparagine glycosylation is found at Asn-76, Asn-125, and Asn-167. Residues 214–238 (DPQKTFQLKIPGLVLVRGDTETLAV) form a bowtie tail region. The Cell attachment site motif lies at 230-232 (RGD). Intrachain disulfides connect Cys-272-Cys-280, Cys-308-Cys-373, and Cys-312-Cys-375.

This sequence belongs to the TGF-beta family. In terms of assembly, latency-associated peptide: Homodimer; disulfide-linked. Latency-associated peptide: Interacts with Transforming growth factor beta-1 (TGF-beta-1) chain; interaction is non-covalent and maintains (TGF-beta-1) in a latent state; each Latency-associated peptide (LAP) monomer interacts with TGF-beta-1 in the other monomer. Transforming growth factor beta-1: Homodimer; disulfide-linked. Transforming growth factor beta-1: Interacts with TGF-beta receptors (tgfbr1 and tgfbr2), leading to signal transduction. Interacts with EFEMP2. Post-translationally, transforming growth factor beta-1 proprotein: The precursor proprotein is cleaved in the Golgi apparatus to form Transforming growth factor beta-1 (TGF-beta-1) and Latency-associated peptide (LAP) chains, which remain non-covalently linked, rendering TGF-beta-1 inactive.

It localises to the secreted. The protein resides in the extracellular space. It is found in the extracellular matrix. Functionally, transforming growth factor beta-1 proprotein: Precursor of the Latency-associated peptide (LAP) and Transforming growth factor beta-1 (TGF-beta-1) chains, which constitute the regulatory and active subunit of TGF-beta-1, respectively. Required to maintain the Transforming growth factor beta-1 (TGF-beta-1) chain in a latent state during storage in extracellular matrix. Associates non-covalently with TGF-beta-1 and regulates its activation via interaction with 'milieu molecules', such as LTBP1, LRRC32/GARP and LRRC33/NRROS, that control activation of TGF-beta-1. Interaction with integrins (ITGAV:ITGB6 or ITGAV:ITGB8) results in distortion of the Latency-associated peptide chain and subsequent release of the active TGF-beta-1. Its function is as follows. Transforming growth factor beta-1: Multifunctional protein that regulates the growth and differentiation of various cell types and is involved in various processes, such as normal development, immune function, microglia function and responses to neurodegeneration. Activation into mature form follows different steps: following cleavage of the proprotein in the Golgi apparatus, Latency-associated peptide (LAP) and Transforming growth factor beta-1 (TGF-beta-1) chains remain non-covalently linked rendering TGF-beta-1 inactive during storage in extracellular matrix. At the same time, LAP chain interacts with 'milieu molecules', such as ltbp1, lrrc32/garp and lrrc33/nrros that control activation of TGF-beta-1 and maintain it in a latent state during storage in extracellular milieus. TGF-beta-1 is released from LAP by integrins (ITGAV:ITGB6 or ITGAV:ITGB8): integrin-binding to LAP stabilizes an alternative conformation of the LAP bowtie tail and results in distortion of the LAP chain and subsequent release of the active TGF-beta-1. Once activated following release of LAP, TGF-beta-1 acts by binding to TGF-beta receptors (tgfbr1 and tgfbr2), which transduce signal. While expressed by many cells types, TGF-beta-1 only has a very localized range of action within cell environment thanks to fine regulation of its activation by Latency-associated peptide chain (LAP) and 'milieu molecules'. Plays an important role in bone remodeling: acts as a potent stimulator of osteoblastic bone formation. Can promote either T-helper 17 cells (Th17) or regulatory T-cells (Treg) lineage differentiation in a concentration-dependent manner. Can induce epithelial-to-mesenchymal transition (EMT) and cell migration in various cell types. This is Transforming growth factor beta-1 proprotein (tgfb1) from Cyprinus carpio (Common carp).